Consider the following 564-residue polypeptide: MRLSQFHLHTTKETPADAELVSHRLMLRAGMIRKLASGLYTWSPLGLRVLRKVEAIVREEMNRAGAVEVLFPTIQPRELWDATGRWEKFGGQLLKIKDRKEQEFCYSPTAEEAAAEFARQEINSYKQLPLNFYQIQTKFRDEIRPRFGVMRAREFLMKDAYSFHLTDEDMAREYDNMRAAYTRIFTRLGLDFRAVQADSGAIGGDASQEFHVIADSGEDSLAFSTGSDYAANVEAASAAPPAPRAAASEAMQQVATPTQKTCEDVAQLLGIALQRTVKSVAVMTQAGFVLVLVRGDHAVNEIKLAKVPGLADYRLANESEIREHLGCEPGFLGPVNTARPVRVVADRDVAALADFVVGANVSGAHLVGVNWGRDLPEPETVADVRNVVEGERAADGGELRLARGIEVGHVFQLGSQYAQALQATVIDEGGKAAVMKMGCYGIGISRIVAAAIEQNHDDAGIIWPAPMAPWQVVVCVINPKQDPQVLAAAQALLDQLLAAGLDAALDDRGLRPGAMFADMELLGIPHRVVVSERGLAAGTFEYRARTADAAESLDKAGLFSRLGH.

It belongs to the class-II aminoacyl-tRNA synthetase family. ProS type 1 subfamily. As to quaternary structure, homodimer.

It is found in the cytoplasm. It carries out the reaction tRNA(Pro) + L-proline + ATP = L-prolyl-tRNA(Pro) + AMP + diphosphate. Functionally, catalyzes the attachment of proline to tRNA(Pro) in a two-step reaction: proline is first activated by ATP to form Pro-AMP and then transferred to the acceptor end of tRNA(Pro). As ProRS can inadvertently accommodate and process non-cognate amino acids such as alanine and cysteine, to avoid such errors it has two additional distinct editing activities against alanine. One activity is designated as 'pretransfer' editing and involves the tRNA(Pro)-independent hydrolysis of activated Ala-AMP. The other activity is designated 'posttransfer' editing and involves deacylation of mischarged Ala-tRNA(Pro). The misacylated Cys-tRNA(Pro) is not edited by ProRS. The protein is Proline--tRNA ligase of Xanthomonas axonopodis pv. citri (strain 306).